Consider the following 280-residue polypeptide: Tobamovirus multiplication protein 2A (280 aa).

Over 1–13 (MACRGCLECLLKL) the chain is Cytoplasmic. A helical transmembrane segment spans residues 14–34 (LNFLLAVAGLGMIGYGIYLFV). At 35 to 78 (EYKRVTDNSVTFDLTNGDQSYVSFGRPILMAVSLSSNIFDNLPK) the chain is on the extracellular side. A helical membrane pass occupies residues 79–99 (AWFIYLFIGIGVALFVISCCG). The Cytoplasmic segment spans residues 100–113 (CVGTCSRSVCCLSC). A helical membrane pass occupies residues 114–134 (YSLLLILLILVELGFAAFIFF). Over 135-162 (DNSWRDELPSDRTGNFDTIYNFLRENWK) the chain is Extracellular. The helical transmembrane segment at 163-183 (IVRWVALGAVVFEALLFLLAL) threads the bilayer. At 184 to 280 (MVRAANTPAE…NEEKGRCTIM (97 aa)) the chain is on the cytoplasmic side. Phosphoserine is present on residues serine 196 and serine 233. The tract at residues 258 to 280 (SESHRFQQMPAQPNEEKGRCTIM) is disordered. Basic and acidic residues predominate over residues 271–280 (NEEKGRCTIM).

The protein belongs to the tetraspanin (TM4SF) family. In terms of assembly, homodimer. Constituent of tobamovirus replication complex. Interacts with TOM1. As to expression, expressed in rosette leaves.

Its subcellular location is the vacuole membrane. Necessary for the efficient intracellular multiplication of tobamoviruses, being a component of the replication complex. This is Tobamovirus multiplication protein 2A (TOM2A) from Arabidopsis thaliana (Mouse-ear cress).